The primary structure comprises 487 residues: GTPase Der (487 aa).

EngA-type G domains lie at 3–166 (PVIA…PRDA) and 193–366 (IKIA…KSAV). Residues 9–16 (GRPNVGKS), 56–60 (DTGGI), 118–121 (NKID), 199–206 (GRPNVGKS), 246–250 (DTAGV), and 311–314 (NKWD) each bind GTP. The KH-like domain maps to 367–451 (TRWPTSRLTQ…PIRIEYKGGE (85 aa)). Residues 448 to 461 (KGGENPYEGKKNTL) are compositionally biased toward basic and acidic residues. The segment at 448-487 (KGGENPYEGKKNTLTDRQVNKKRRLMSHHKKAEKKRRDKR) is disordered. Residues 467–487 (NKKRRLMSHHKKAEKKRRDKR) are compositionally biased toward basic residues.

It belongs to the TRAFAC class TrmE-Era-EngA-EngB-Septin-like GTPase superfamily. EngA (Der) GTPase family. Associates with the 50S ribosomal subunit.

Functionally, GTPase that plays an essential role in the late steps of ribosome biogenesis. The chain is GTPase Der from Pseudomonas putida (strain W619).